A 57-amino-acid polypeptide reads, in one-letter code: Small polypeptide DEVIL 20 (57 aa).

Asparagine 5 carries N-linked (GlcNAc...) asparagine glycosylation. The segment at 16 to 47 (TFKAKCSHMVRKQRAKFYILGRCLAMLVCGRG) is required for DVL/RTFL small polypeptide activity. The helical transmembrane segment at 29 to 45 (RAKFYILGRCLAMLVCG) threads the bilayer.

The protein belongs to the DVL/RTFL small polypeptides family.

The protein resides in the cell membrane. Small polypeptide acting as a regulatory molecule which coordinates cellular responses required for differentiation, growth and development, probably by restricting polar cell proliferation in lateral organs and coordinating socket cell recruitment and differentiation at trichome sites. The chain is Small polypeptide DEVIL 20 from Arabidopsis thaliana (Mouse-ear cress).